A 329-amino-acid chain; its full sequence is Cathepsin K (329 aa).

Residues 1 to 15 (MWVFKFLLLPVVSFA) form the signal peptide. A propeptide spans 16 to 114 (LSPEETLDTQ…TLYTPEWEGR (99 aa)) (activation peptide). N103 carries an N-linked (GlcNAc...) asparagine glycan. Cystine bridges form between C136-C177 and C170-C210. C139 is a catalytic residue. N213 carries N-linked (GlcNAc...) asparagine glycosylation. The cysteines at positions 269 and 318 are disulfide-linked. Active-site residues include H276 and N296.

This sequence belongs to the peptidase C1 family.

The protein localises to the lysosome. The protein resides in the secreted. Its subcellular location is the apical cell membrane. It catalyses the reaction Broad proteolytic activity. With small-molecule substrates and inhibitors, the major determinant of specificity is P2, which is preferably Leu, Met &gt; Phe, and not Arg.. In terms of biological role, thiol protease involved in osteoclastic bone resorption and may participate partially in the disorder of bone remodeling. Displays potent endoprotease activity against fibrinogen at acid pH. May play an important role in extracellular matrix degradation. Involved in the release of thyroid hormone thyroxine (T4) by limited proteolysis of TG/thyroglobulin in the thyroid follicle lumen. The polypeptide is Cathepsin K (Ctsk) (Rattus norvegicus (Rat)).